A 208-amino-acid polypeptide reads, in one-letter code: MNSLFTSAFSPLAVSLGLLLVMTSAFPTPGPLGEDFKNDTTPSRLLLTTPEKTEALIKHIVDKISAIRKEICEKNDECENSKETLAENKLKLPKMEEKDGCFQSGFNQAICLIKTTAGLLEYQIYLDFLQNEFEGNQETVMELQSSIRTLIQILKEKIAGLITTPATNTDMLEKMQSSNEWVKNAKVIIILRSLENFLQFSLRAIRMK.

The first 29 residues, 1-29, serve as a signal peptide directing secretion; that stretch reads MNSLFTSAFSPLAVSLGLLLVMTSAFPTP. Residue asparagine 38 is glycosylated (N-linked (GlcNAc...) asparagine). Cysteine 72 and cysteine 78 are disulfide-bonded. Serine 81 carries the phosphoserine modification. Cysteine 101 and cysteine 111 are disulfide-bonded.

Belongs to the IL-6 superfamily. In terms of assembly, component of a hexamer of two molecules each of IL6, IL6R and IL6ST; first binds to IL6R to associate with the signaling subunit IL6ST. Interacts with IL6R (via the N-terminal ectodomain); this interaction may be affected by IL6R-binding with SORL1, hence decreasing IL6 cis signaling. Interacts with SORL1 (via the N-terminal ectodomain); this interaction leads to IL6 internalization and lysosomal degradation. May form a trimeric complex with the soluble SORL1 ectodomain and soluble IL6R receptor; this interaction might stabilize circulating IL6, hence promoting IL6 trans signaling.

It localises to the secreted. Functionally, cytokine with a wide variety of biological functions in immunity, tissue regeneration, and metabolism. Binds to IL6R, then the complex associates to the signaling subunit IL6ST/gp130 to trigger the intracellular IL6-signaling pathway. The interaction with the membrane-bound IL6R and IL6ST stimulates 'classic signaling', whereas the binding of IL6 and soluble IL6R to IL6ST stimulates 'trans-signaling'. Alternatively, 'cluster signaling' occurs when membrane-bound IL6:IL6R complexes on transmitter cells activate IL6ST receptors on neighboring receiver cells. Its function is as follows. IL6 is a potent inducer of the acute phase response. Rapid production of IL6 contributes to host defense during infection and tissue injury, but excessive IL6 synthesis is involved in disease pathology. In the innate immune response, is synthesized by myeloid cells, such as macrophages and dendritic cells, upon recognition of pathogens through toll-like receptors (TLRs) at the site of infection or tissue injury. In the adaptive immune response, is required for the differentiation of B cells into immunoglobulin-secreting cells. Plays a major role in the differentiation of CD4(+) T cell subsets. Essential factor for the development of T follicular helper (Tfh) cells that are required for the induction of germinal-center formation. Required to drive naive CD4(+) T cells to the Th17 lineage. Also required for proliferation of myeloma cells and the survival of plasmablast cells. Acts as an essential factor in bone homeostasis and on vessels directly or indirectly by induction of VEGF, resulting in increased angiogenesis activity and vascular permeability. Induces, through 'trans-signaling' and synergistically with IL1B and TNF, the production of VEGF. Involved in metabolic controls, is discharged into the bloodstream after muscle contraction increasing lipolysis and improving insulin resistance. 'Trans-signaling' in central nervous system also regulates energy and glucose homeostasis. Mediates, through GLP-1, crosstalk between insulin-sensitive tissues, intestinal L cells and pancreatic islets to adapt to changes in insulin demand. Also acts as a myokine. Plays a protective role during liver injury, being required for maintenance of tissue regeneration. Also has a pivotal role in iron metabolism by regulating HAMP/hepcidin expression upon inflammation or bacterial infection. Through activation of IL6ST-YAP-NOTCH pathway, induces inflammation-induced epithelial regeneration. The protein is Interleukin-6 (IL6) of Capra hircus (Goat).